The chain runs to 331 residues: Elongation factor Ts, mitochondrial (331 aa).

Positions 254 to 295 (SPLTVGEMPEVREEEGEKKDGDKQDEEERSTDSDEDETQMLR) are disordered. The segment covering 262–275 (PEVREEEGEKKDGD) has biased composition (basic and acidic residues). Residues 276–291 (KQDEEERSTDSDEDET) show a composition bias toward acidic residues.

It belongs to the EF-Ts family.

It localises to the mitochondrion. In terms of biological role, associates with the EF-Tu.GDP complex and induces the exchange of GDP to GTP. It remains bound to the aminoacyl-tRNA.EF-Tu.GTP complex up to the GTP hydrolysis stage on the ribosome. The chain is Elongation factor Ts, mitochondrial from Branchiostoma floridae (Florida lancelet).